Consider the following 396-residue polypeptide: Deoxyguanosinetriphosphate triphosphohydrolase-like protein (396 aa).

The region spanning 62 to 198 (RLTHSLEVAQ…AALADDIAYN (137 aa)) is the HD domain.

This sequence belongs to the dGTPase family. Type 2 subfamily.

The protein is Deoxyguanosinetriphosphate triphosphohydrolase-like protein of Jannaschia sp. (strain CCS1).